A 1004-amino-acid chain; its full sequence is NACHT, LRR and PYD domains-containing protein 9C (1004 aa).

In terms of domain architecture, Pyrin spans 1–92 (MVDSSSYGLL…TMAQIERRDK (92 aa)). One can recognise an NACHT domain in the interval 143-465 (ATAVVLGTRG…KQDKDTYHPV (323 aa)). 149-156 (GTRGKGKT) lines the ATP pocket. LRR repeat units follow at residues 750 to 770 (KVKH…MFLC), 779 to 800 (VLES…HLYE), 807 to 828 (HLSL…LLCE), 836 to 857 (TLKE…EISA), and 864 to 884 (NLKT…KRLC).

The protein belongs to the NLRP family. Oocyte specific.

It is found in the cytoplasm. Functionally, may be involved in inflammation. This Mus musculus (Mouse) protein is NACHT, LRR and PYD domains-containing protein 9C (Nlrp9c).